Consider the following 234-residue polypeptide: Ribosomal RNA small subunit methyltransferase G (234 aa).

S-adenosyl-L-methionine is bound by residues Gly74, Phe79, 125–126, and Arg144; that span reads AE.

It belongs to the methyltransferase superfamily. RNA methyltransferase RsmG family.

The protein localises to the cytoplasm. Specifically methylates the N7 position of a guanine in 16S rRNA. The protein is Ribosomal RNA small subunit methyltransferase G of Roseiflexus castenholzii (strain DSM 13941 / HLO8).